Here is a 130-residue protein sequence, read N- to C-terminus: Large ribosomal subunit protein eL32 (130 aa).

A Phosphoserine modification is found at Ser-40.

It belongs to the eukaryotic ribosomal protein eL32 family. In terms of assembly, component of the large ribosomal subunit (LSU). Mature yeast ribosomes consist of a small (40S) and a large (60S) subunit. The 40S small subunit contains 1 molecule of ribosomal RNA (18S rRNA) and 33 different proteins (encoded by 57 genes). The large 60S subunit contains 3 rRNA molecules (25S, 5.8S and 5S rRNA) and 46 different proteins (encoded by 81 genes).

The protein localises to the cytoplasm. In terms of biological role, component of the ribosome, a large ribonucleoprotein complex responsible for the synthesis of proteins in the cell. The small ribosomal subunit (SSU) binds messenger RNAs (mRNAs) and translates the encoded message by selecting cognate aminoacyl-transfer RNA (tRNA) molecules. The large subunit (LSU) contains the ribosomal catalytic site termed the peptidyl transferase center (PTC), which catalyzes the formation of peptide bonds, thereby polymerizing the amino acids delivered by tRNAs into a polypeptide chain. The nascent polypeptides leave the ribosome through a tunnel in the LSU and interact with protein factors that function in enzymatic processing, targeting, and the membrane insertion of nascent chains at the exit of the ribosomal tunnel. This is Large ribosomal subunit protein eL32 from Saccharomyces cerevisiae (strain ATCC 204508 / S288c) (Baker's yeast).